A 547-amino-acid polypeptide reads, in one-letter code: Probable high-affinity hexose transporter ght8, mitochondrial (547 aa).

The N-terminal 21 residues, 1–21, are a transit peptide targeting the mitochondrion; sequence MGKTLTIVMLVFVSMAGWMFG. Residues 22-86 are Mitochondrial intermembrane-facing; sequence ADTGSIGGIT…SPLMDRIGKR (65 aa). Residues 87–107 form a helical membrane-spanning segment; the sequence is VSIMFWTIVYLIGIILQVTAV. The Cytoplasmic segment spans residues 108-112; it reads PSWVQ. The helical transmembrane segment at 113-133 threads the bilayer; that stretch reads IMVAKIWTGLAIGALSVLAPG. Residues 134–144 lie on the Mitochondrial intermembrane side of the membrane; that stretch reads FQSEVAPATLR. The helical transmembrane segment at 145-165 threads the bilayer; sequence GTIVTTYQLAVTGGIFIAACI. The Cytoplasmic segment spans residues 166–179; that stretch reads NMGTHKLHKTAQWR. The chain crosses the membrane as a helical span at residues 180–200; sequence VSMGINLLWGIIMFIGISFLP. Topologically, residues 201–304 are mitochondrial intermembrane; it reads ESPRYLIAIG…TGMNSPYLSA (104 aa). The helical transmembrane segment at 305-325 threads the bilayer; that stretch reads LILDAVNFGCTFGGLFVLEFF. The Cytoplasmic segment spans residues 326–328; that stretch reads GRR. The chain crosses the membrane as a helical span at residues 329-349; it reads MPLIIGGVWQSITFFIYAAVG. Over 350–363 the chain is Mitochondrial intermembrane; sequence NRALTRKNGTSNHR. Residues 364 to 384 form a helical membrane-spanning segment; that stretch reads AGAVMIVFSCLFIFSFAQTWG. Residues 385 to 404 are Cytoplasmic-facing; sequence PAAYVIVGESYPIRYRSKCA. A helical membrane pass occupies residues 405–425; sequence AVATTGNWLWGFLITFFTPFI. The Mitochondrial intermembrane portion of the chain corresponds to 426 to 432; it reads SDSIGFK. Residues 433–453 form a helical membrane-spanning segment; it reads YGYIFAACNLCAACIIFLFAH. The Cytoplasmic portion of the chain corresponds to 454–547; it reads ETKGLTLEEI…NYVDEQDRYA (94 aa). A disordered region spans residues 482 to 547; the sequence is GQAAKQQQEV…NYVDEQDRYA (66 aa). The segment covering 517–529 has biased composition (low complexity); sequence TSSNDITSSTSSS. Position 519 is a phosphoserine (Ser-519). 2 positions are modified to phosphothreonine: Thr-523 and Thr-526. Phosphoserine occurs at positions 527, 528, 529, and 537.

Belongs to the major facilitator superfamily. Sugar transporter (TC 2.A.1.1) family.

The protein resides in the mitochondrion membrane. This Schizosaccharomyces pombe (strain 972 / ATCC 24843) (Fission yeast) protein is Probable high-affinity hexose transporter ght8, mitochondrial (ght8).